We begin with the raw amino-acid sequence, 165 residues long: UPF0254 protein MMP0935 (165 aa).

It belongs to the UPF0254 family.

This is UPF0254 protein MMP0935 from Methanococcus maripaludis (strain DSM 14266 / JCM 13030 / NBRC 101832 / S2 / LL).